The sequence spans 79 residues: MSEFWHKLGCCVVEKPQPKKRRRRIDRTMIGEPMNFVHLTHIGSGEMGAGDGLAMTGAVQEQMRSKGNRDRPWSNSRAL.

S-palmitoyl cysteine attachment occurs at residues Cys10 and Cys11. One can recognise a CRIB domain in the interval 30–43 (IGEPMNFVHLTHIG). The interval 48 to 79 (GAGDGLAMTGAVQEQMRSKGNRDRPWSNSRAL) is disordered. Basic and acidic residues predominate over residues 63 to 72 (MRSKGNRDRP).

The protein belongs to the CDC42SE/SPEC family. Interacts with CDC42 (in GTP-bound form). Interacts weakly with RAC1 and not at all with RHOA.

It is found in the cytoplasm. It localises to the cytoskeleton. The protein localises to the cell membrane. In terms of biological role, probably involved in the organization of the actin cytoskeleton by acting downstream of CDC42, inducing actin filament assembly. Alters CDC42-induced cell shape changes. In activated T-cells, may play a role in CDC42-mediated F-actin accumulation at the immunological synapse. May play a role in early contractile events in phagocytosis in macrophages. The chain is CDC42 small effector protein 1 (Cdc42se1) from Rattus norvegicus (Rat).